We begin with the raw amino-acid sequence, 129 residues long: Small ribosomal subunit protein uS12 (129 aa).

Position 89 is a 3-methylthioaspartic acid (Asp-89). The disordered stretch occupies residues 101–129 (SLDTSGVADRKQSRSKYGAKQPKAGAAKK). Over residues 116–129 (KYGAKQPKAGAAKK) the composition is skewed to low complexity.

It belongs to the universal ribosomal protein uS12 family. As to quaternary structure, part of the 30S ribosomal subunit. Contacts proteins S8 and S17. May interact with IF1 in the 30S initiation complex.

Its function is as follows. With S4 and S5 plays an important role in translational accuracy. In terms of biological role, interacts with and stabilizes bases of the 16S rRNA that are involved in tRNA selection in the A site and with the mRNA backbone. Located at the interface of the 30S and 50S subunits, it traverses the body of the 30S subunit contacting proteins on the other side and probably holding the rRNA structure together. The combined cluster of proteins S8, S12 and S17 appears to hold together the shoulder and platform of the 30S subunit. The chain is Small ribosomal subunit protein uS12 from Chlorobaculum parvum (strain DSM 263 / NCIMB 8327) (Chlorobium vibrioforme subsp. thiosulfatophilum).